A 157-amino-acid chain; its full sequence is Holo-[acyl-carrier-protein] synthase (157 aa).

Mg(2+) is bound by residues aspartate 8 and glutamate 59.

This sequence belongs to the P-Pant transferase superfamily. AcpS family. The cofactor is Mg(2+).

It is found in the cytoplasm. The enzyme catalyses apo-[ACP] + CoA = holo-[ACP] + adenosine 3',5'-bisphosphate + H(+). Its function is as follows. Transfers the 4'-phosphopantetheine moiety from coenzyme A to a Ser of acyl-carrier-protein. The polypeptide is Holo-[acyl-carrier-protein] synthase (Gluconobacter oxydans (strain 621H) (Gluconobacter suboxydans)).